A 496-amino-acid polypeptide reads, in one-letter code: UDP-N-acetylmuramoylalanine--D-glutamate ligase (496 aa).

ATP is bound at residue 130–136 (GTNGKTT).

Belongs to the MurCDEF family.

It is found in the cytoplasm. It carries out the reaction UDP-N-acetyl-alpha-D-muramoyl-L-alanine + D-glutamate + ATP = UDP-N-acetyl-alpha-D-muramoyl-L-alanyl-D-glutamate + ADP + phosphate + H(+). The protein operates within cell wall biogenesis; peptidoglycan biosynthesis. Cell wall formation. Catalyzes the addition of glutamate to the nucleotide precursor UDP-N-acetylmuramoyl-L-alanine (UMA). The chain is UDP-N-acetylmuramoylalanine--D-glutamate ligase from Mycobacterium bovis (strain ATCC BAA-935 / AF2122/97).